A 487-amino-acid polypeptide reads, in one-letter code: Arginine ADP-riboxanase CopC (487 aa).

Over residues 1 to 12 (MRVENHSPSLSK) the composition is skewed to polar residues. The tract at residues 1-27 (MRVENHSPSLSKLNPPEAGSGDPTAIG) is disordered. 8 residues coordinate NAD(+): His-137, Gln-138, Ser-139, Leu-143, Ala-150, Ala-152, Asn-154, and Leu-157. A nicotinamide-binding site is contributed by His-137. ADP-D-ribose-binding residues include Ser-139 and Leu-143. ADP-D-ribose-binding residues include Ala-152, Asn-154, Leu-157, Gly-166, Asn-167, Thr-168, and Phe-183. Asn-167 provides a ligand contact to NAD(+). Residue Phe-183 coordinates NAD(+). Residues Phe-183, Phe-184, His-202, and Phe-207 each coordinate nicotinamide. His-202 lines the NAD(+) pocket. 2 residues coordinate ADP-D-ribose: Phe-207 and Asp-230. NAD(+) contacts are provided by Asp-230 and Glu-325. Glu-325 serves as a coordination point for nicotinamide. Residue Glu-325 is part of the active site. 2 ANK repeats span residues 368 to 398 (DAVT…EAGD) and 444 to 476 (SGET…LLSE).

This sequence belongs to the OspC family. Interacts with host calmodulin (CALM1, CALM2 and/or CALM3); specifically interacts with the apo form of calmodulin and calmodulin-binding is required to mediate arginine ADP-riboxanation of host caspases.

It localises to the secreted. It is found in the host cytoplasm. The catalysed reaction is L-arginyl-[protein] + NAD(+) = ADP-riboxanated L-argininyl-[protein] + nicotinamide + NH4(+) + H(+). Interaction with host calmodulin (CALM1, CALM2 and/or CALM3) is required to mediate arginine ADP-riboxanation of host caspases. Its function is as follows. ADP-riboxanase effector that inhibits host cell programmed cell death. Acts by mediating arginine ADP-riboxanation of host caspases (CASP3, CASP7, CASP8 and CASP9), blocking their processing and activation. ADP-riboxanation of host apoptotic caspases (CASP3, CASP7, CASP8 and CASP9) prevents their activation, thereby inhibiting host cell apoptosis. ADP-riboxanation of host CASP8 also inhibits host cell necroptosis. ADP-riboxanation of host CASP3 also abolishes pyroptosis by preventing its ability to cleave GSDME. May also able to inactivate CASP4/CASP11, blocking inhibiting LPS-induced pyroptosis; however this activity is unsure in vivo. ADP-riboxanation takes place in several steps: CopC first binds host caspases and NAD(+); NAD(+) is hydrolyzed to nicotinamide and ADP-D-ribose. CopC then transfers the ADP-D-ribose to the modified arginine of caspases and forms the ADP-D-ribose-deacylization on arginine, leading to deamination to remove one N-omega group on target arginine. The protein is Arginine ADP-riboxanase CopC of Chromobacterium violaceum (strain ATCC 12472 / DSM 30191 / JCM 1249 / CCUG 213 / NBRC 12614 / NCIMB 9131 / NCTC 9757 / MK).